The primary structure comprises 147 residues: Austinoid biosynthesis cluster protein H (147 aa).

It belongs to the trt14 isomerase family. In terms of assembly, homodimer.

Its pathway is secondary metabolite biosynthesis; terpenoid biosynthesis. In terms of biological role, part of the gene cluster that mediates the biosynthesis of calidodehydroaustin, a fungal meroterpenoid. The first step of the pathway is the synthesis of 3,5-dimethylorsellinic acid by the polyketide synthase ausA. 3,5-dimethylorsellinic acid is then prenylated by the polyprenyl transferase ausN. Further epoxidation by the FAD-dependent monooxygenase ausM and cyclization by the probable terpene cyclase ausL lead to the formation of protoaustinoid A. Protoaustinoid A is then oxidized to spiro-lactone preaustinoid A3 by the combined action of the FAD-binding monooxygenases ausB and ausC, and the dioxygenase ausE. Acid-catalyzed keto-rearrangement and ring contraction of the tetraketide portion of preaustinoid A3 by ausJ lead to the formation of preaustinoid A4. The aldo-keto reductase ausK, with the help of ausH, is involved in the next step by transforming preaustinoid A4 into isoaustinone which is in turn hydroxylated by the P450 monooxygenase ausI to form austinolide. The cytochrome P450 monooxygenase ausG modifies austinolide to austinol. Austinol is further acetylated to austin by the O-acetyltransferase ausP, which spontaneously changes to dehydroaustin. The cytochrome P450 monooxygenase ausR then converts dehydroaustin is into 7-dehydrodehydroaustin. The hydroxylation catalyzed by ausR permits the O-acetyltransferase ausQ to add an additional acetyl group to the molecule, leading to the formation of acetoxydehydroaustin. The short chain dehydrogenase ausT catalyzes the reduction of the double bond present between carbon atoms 1 and 2 to convert 7-dehydrodehydroaustin into 1,2-dihydro-7-hydroxydehydroaustin. AusQ catalyzes not only an acetylation reaction but also the addition of the PKS ausV diketide product to 1,2-dihydro-7-hydroxydehydroaustin, forming precalidodehydroaustin. Finally, the iron/alpha-ketoglutarate-dependent dioxygenase converts precalidodehydroaustin into calidodehydroaustin. This is Austinoid biosynthesis cluster protein H from Aspergillus calidoustus.